The following is a 512-amino-acid chain: NAD(P)H-quinone oxidoreductase subunit 2 B, chloroplastic (512 aa).

The next 14 helical transmembrane spans lie at 31-51, 57-77, 99-119, 124-144, 149-169, 183-203, 229-249, 261-281, 295-315, 323-343, 354-374, 395-415, 418-438, and 484-504; these read FIFPECILIFGLILLLMIDLT, IPWLYFISSTSFVMSITALLF, IFQFLILLCSTLCIPLSVEYI, MAITEFLLFILTATLGGMFLC, LITIFVALECFSLCSYLLSGY, YLLMGGASSSILVYGFSWLYG, ISIALIFITVGIGFKLSLAPF, PTPVVAFLSVTSKVAALALAT, WHLLLEILAILSMIFGNLIAI, MLAYSSIGQIGYVIIGIIVGD, YMLFYIAMNLGTFACIILFGL, ALSLALCLLSLGGLPPLAGFF, LYLFWCGWQAGLYFLVSIGLL, and MIVCVIASTILGISMNPIIAI.

This sequence belongs to the complex I subunit 2 family. As to quaternary structure, NDH is composed of at least 16 different subunits, 5 of which are encoded in the nucleus.

The protein localises to the plastid. It localises to the chloroplast thylakoid membrane. The catalysed reaction is a plastoquinone + NADH + (n+1) H(+)(in) = a plastoquinol + NAD(+) + n H(+)(out). It carries out the reaction a plastoquinone + NADPH + (n+1) H(+)(in) = a plastoquinol + NADP(+) + n H(+)(out). Its function is as follows. NDH shuttles electrons from NAD(P)H:plastoquinone, via FMN and iron-sulfur (Fe-S) centers, to quinones in the photosynthetic chain and possibly in a chloroplast respiratory chain. The immediate electron acceptor for the enzyme in this species is believed to be plastoquinone. Couples the redox reaction to proton translocation, and thus conserves the redox energy in a proton gradient. The sequence is that of NAD(P)H-quinone oxidoreductase subunit 2 B, chloroplastic from Arabidopsis thaliana (Mouse-ear cress).